A 344-amino-acid polypeptide reads, in one-letter code: Fibronectin type 3 and ankyrin repeat domains 1 protein (344 aa).

Residues Lys-11–Pro-108 enclose the Fibronectin type-III domain. ANK repeat units follow at residues Ile-109–Val-139, Phe-143–Leu-172, Ser-176–Ala-205, Gly-209–Val-238, Ser-243–Ile-273, and Asp-277–Val-306.

As to quaternary structure, interacts with COPS5; regulates the phosphorylation of JUN and the transcriptional activity of AP-1. Interacts with RYBP; may prevent the ubiquitin-mediated proteasomal degradation of FANK1. Polyubiquitinated. Polyubiquitination leads to proteasomal degradation. As to expression, mostly restricted to testis (at protein level), including mid to late pachytene spermatocytes (stages VI-X), diplotene spermatocytes (stage XI), meiotically dividing spermatocytes (stage XII) and spermatids in steps 1-14. Highest levels in late pachytene spermatocytes and spermatids in steps 1-9.

It is found in the nucleus. Its subcellular location is the cytoplasm. It localises to the cytosol. The protein resides in the cytoskeleton. The protein localises to the cilium basal body. It is found in the cell projection. Its subcellular location is the cilium. Functionally, through the activation of JUN and AP-1-mediated transcription, may regulate apoptosis. The protein is Fibronectin type 3 and ankyrin repeat domains 1 protein of Mus musculus (Mouse).